The primary structure comprises 349 residues: Rhodopsin (349 aa).

At 1–33 the chain is on the extracellular side; the sequence is TEGPYFYIPMSNATGIVRSPYEYPQYYLVYPAA. Asn12 carries N-linked (GlcNAc...) asparagine glycosylation. The helical transmembrane segment at 34–58 threads the bilayer; the sequence is YAVLGAYMFFLIIFGFPVNFLTLYV. Over 59–70 the chain is Cytoplasmic; sequence TIEHKKLRTPLN. The helical transmembrane segment at 71–93 threads the bilayer; the sequence is YILLNLAVADLFMVIGGFTTTIY. At 94–107 the chain is on the extracellular side; it reads TSMHGYFVLGRLGC. An intrachain disulfide couples Cys107 to Cys184. The helical transmembrane segment at 108–130 threads the bilayer; that stretch reads NLEGFSATLGGMIGLWSLVVLAI. The 'Ionic lock' involved in activated form stabilization signature appears at 131-133; the sequence is ERW. Residues 131-149 are Cytoplasmic-facing; sequence ERWVVVCKPMSNFRFGENH. A helical transmembrane segment spans residues 150 to 170; that stretch reads AIMGVTLTWVMGLACTVPPLV. Topologically, residues 171–199 are extracellular; that stretch reads GWSRYIPEGMQCSCGIDYYTRAEGFNNDS. N-linked (GlcNAc...) asparagine glycosylation occurs at Asn197. Residues 200-221 form a helical membrane-spanning segment; that stretch reads YVLYMFVCHFLIPLVVIFFCYG. The Cytoplasmic segment spans residues 222 to 249; the sequence is RLLCAVKEAAAAQQESETTQRAEREVTR. A helical transmembrane segment spans residues 250–271; the sequence is MVILMVIGFLVCWLPYASVAWY. The Extracellular segment spans residues 272–283; it reads IFTHQGSEFGPL. Residues 284–305 traverse the membrane as a helical segment; that stretch reads FMTIPAFFAKSSSIYNPVIYIC. N6-(retinylidene)lysine is present on Lys293. Topologically, residues 306 to 349 are cytoplasmic; sequence MNKQFRQCMLTTLFCGKNPFEEEEGASSTKTEASSASSSSVSPA. Residue Cys320 is the site of S-palmitoyl cysteine attachment. Residues 326 to 349 are disordered; sequence EEEEGASSTKTEASSASSSSVSPA. Low complexity predominate over residues 331-349; it reads ASSTKTEASSASSSSVSPA.

Belongs to the G-protein coupled receptor 1 family. Opsin subfamily. Phosphorylated on some or all of the serine and threonine residues present in the C-terminal region. Post-translationally, contains one covalently linked retinal chromophore.

It is found in the membrane. It localises to the cell projection. Its subcellular location is the cilium. The protein resides in the photoreceptor outer segment. Photoreceptor required for image-forming vision at low light intensity. While most salt water fish species use retinal as chromophore, most freshwater fish use 3-dehydroretinal, or a mixture of retinal and 3-dehydroretinal. Light-induced isomerization of 11-cis to all-trans retinal triggers a conformational change that activates signaling via G-proteins. Subsequent receptor phosphorylation mediates displacement of the bound G-protein alpha subunit by arrestin and terminates signaling. The polypeptide is Rhodopsin (rho) (Myripristis violacea (Lattice soldierfish)).